Here is a 195-residue protein sequence, read N- to C-terminus: Imidazoleglycerol-phosphate dehydratase (195 aa).

It belongs to the imidazoleglycerol-phosphate dehydratase family.

It is found in the cytoplasm. It catalyses the reaction D-erythro-1-(imidazol-4-yl)glycerol 3-phosphate = 3-(imidazol-4-yl)-2-oxopropyl phosphate + H2O. Its pathway is amino-acid biosynthesis; L-histidine biosynthesis; L-histidine from 5-phospho-alpha-D-ribose 1-diphosphate: step 6/9. The polypeptide is Imidazoleglycerol-phosphate dehydratase (Cereibacter sphaeroides (strain ATCC 17025 / ATH 2.4.3) (Rhodobacter sphaeroides)).